The chain runs to 364 residues: Putative agmatine deiminase (364 aa).

The active-site Amidino-cysteine intermediate is Cys355.

The protein belongs to the agmatine deiminase family.

It catalyses the reaction agmatine + H2O = N-carbamoylputrescine + NH4(+). This Mycoplasma mycoides subsp. mycoides SC (strain CCUG 32753 / NCTC 10114 / PG1) protein is Putative agmatine deiminase.